The chain runs to 124 residues: Conotoxin Im14.2 (124 aa).

An N-terminal signal peptide occupies residues 1–20; it reads MARFLSILLCFAMATGLAAG. Positions 21-99 are excised as a propeptide; that stretch reads IRYPDRVLGR…AENPVRDPKK (79 aa).

Contain 2 disulfide bonds. As to expression, expressed by the venom duct.

It localises to the secreted. Its function is as follows. Probable neurotoxin. The chain is Conotoxin Im14.2 from Conus imperialis (Imperial cone).